A 1283-amino-acid polypeptide reads, in one-letter code: MSREDLSIAEDLNQVSKPLLKVKLLEVLGQGDFKHLKALVDNEFQPKDDPSVQQVLNLILHYAVQVAPILLIKEIVAHWVDQVGDEKSSSKSDDGIHLDLNYQDENGNTPLHLAAAQSRSDVISFLLSQKSINDCVKNKAHQQPLDMCKDLNVAQMIQLKRDDYFLETVHSLRAAMNKRDFSKLDSIWKNPRNLNLLDINGIDPETGTTLLYEYSQKKDIEMCQWLLKHGAEATVKDGKGRSPLDLVKNIKLPAKPSNNVTPEIKLKNLLEKNLREQAIVHEDVASSKPPTYKGFLKKWTNFAHGYKLRWFILSGDGNLSYYKDQSHVDRPRGTLKVSTCRLHIDSSEKLNFELLGGITGTTRWRLKGNHPIETTRWVNAIQSAIRFAKDKEILNKKKAVPPSLALKNKSPALISHSKTQGSLPEASQYYQHTLHKEVIQPSSVSLYRRPSNNLSVVSSEIQLNDNLTESGKRFVSKMIENRLDGSKTPVGVHTGSALQRVRSSNTLKSNRSMQSGSGVASPIDKVPNGANLSQSNTTTGSTASLSDNNYIDNFEGDEANSDDEEEDLGINFDRDEEYIKAQYGPYKEKLDMYEQAISIELSSLIELIEQEEPSPEVWLTIKKSLINTSTIFGKLKDLTYKRDKRLVDMVSKQGDVNNVWVQSVKELEMELSNKTERLASIDKERRGLKKILHKKLLESHATAGNKESLENDKEQESDTTASTLGQIAKFISATKEEDEASDADEFYDAAELVDEVTELTEAHPEISTAAAPKHAPPPVPNETDNDSQYVQDEKSKIESNVEKTSQKFEKQNNLVTEDEPKTDQSLKNFKAEDKESQVKEKTKEIASSVIGEKTIVAVTTVQKRKEEYLLKEGSYLGYEDGIRKRLSMDKDDRPKISLWAVLKSMVGKDMTRMTLPVTFNEPTSLLQRVAEDLEYSELLDQAATFEDSTLRTLYVAAFTASSYASTTKRVAKPFNPLLGETFEYSRPDKQYRFFTEQVSHHPPISATWTESPRWDFWGESFVDTKFNGRSFNVKHLGLWHIKLRPNDNEKEELYTWKKPNNTVIGILIGNPQVDNHGEVNVVNHTTGDHCKLYFKARGWRSSGAYEITGEVYNKKKQKVWILGGHWNEAIFAKKVVKDGDLSLEKTRTAASAGNGPTDDGTKFLIWKANDRPEEPFNLTPFAITLNAPQPHLLPWLPPTDTRLRPDQRAMEDGRYDEAGDEKFRVEEKQRAARRKREENNLEYHPQWFVRDTHPITKAKYWRYTGKYWVKRRDHDLKDCGDIF.

An N-acetylserine modification is found at serine 2. Residue serine 7 is modified to Phosphoserine. ANK repeat units follow at residues 106 to 134 (NGNT…SIND) and 206 to 235 (TGTT…EATV). Positions 289–386 (PPTYKGFLKK…WVNAIQSAIR (98 aa)) constitute a PH domain. Phosphoserine is present on residues serine 422, serine 445, serine 451, serine 455, serine 458, serine 459, and serine 486. Threonine 488 carries the phosphothreonine modification. 2 stretches are compositionally biased toward polar residues: residues 504–518 (SNTL…SGSG) and 530–551 (ANLS…NNYI). 2 disordered regions span residues 504–571 (SNTL…LGIN) and 702–721 (TAGN…DTTA). Residues serine 512 and serine 515 each carry the phosphoserine modification. A compositionally biased stretch (acidic residues) spans 554–568 (FEGDEANSDDEEEDL). Positions 707-716 (ESLENDKEQE) are enriched in basic and acidic residues. The residue at position 717 (serine 717) is a Phosphoserine. Positions 745 to 751 (EFYDAAE) match the FFAT motif. Residues 767-834 (STAAAPKHAP…SLKNFKAEDK (68 aa)) are disordered. A Phosphothreonine modification is found at threonine 783. Serine 787 carries the phosphoserine modification. 2 stretches are compositionally biased toward basic and acidic residues: residues 791–810 (QDEK…KFEK) and 818–834 (DEPK…AEDK). A phosphoserine mark is found at serine 825 and serine 1151. The interval 897–1268 (SLWAVLKSMV…KYWRYTGKYW (372 aa)) is OSBP-related domain (ORD).

This sequence belongs to the OSBP family. As to quaternary structure, interacts with SCS2.

It is found in the cell membrane. It localises to the endoplasmic reticulum membrane. Lipid transport protein (LTP) involved in non-vesicular transfer of lipids between membranes. Functions in phosphoinositide-coupled directional transport of various lipids by carrying the lipid molecule in a hydrophobic pocket and transferring it between membranes through the cytosol. Involved in maintenance of intracellular sterol distribution and homeostasis. Binds and transports sterol. Plays a role in the positive regulation of vesicular transport of ceramide from the ER to the Golgi, negatively regulating COPII-mediated ER export of cargos. This Saccharomyces cerevisiae (strain ATCC 204508 / S288c) (Baker's yeast) protein is Oxysterol-binding protein homolog 2.